Here is a 186-residue protein sequence, read N- to C-terminus: Peptidyl-tRNA hydrolase (186 aa).

Residue Tyr14 participates in tRNA binding. His19 (proton acceptor) is an active-site residue. Tyr64, Asn66, and Asn112 together coordinate tRNA.

The protein belongs to the PTH family. Monomer.

Its subcellular location is the cytoplasm. It catalyses the reaction an N-acyl-L-alpha-aminoacyl-tRNA + H2O = an N-acyl-L-amino acid + a tRNA + H(+). Its function is as follows. Hydrolyzes ribosome-free peptidyl-tRNAs (with 1 or more amino acids incorporated), which drop off the ribosome during protein synthesis, or as a result of ribosome stalling. Functionally, catalyzes the release of premature peptidyl moieties from peptidyl-tRNA molecules trapped in stalled 50S ribosomal subunits, and thus maintains levels of free tRNAs and 50S ribosomes. This Bacillus cereus (strain ATCC 10987 / NRS 248) protein is Peptidyl-tRNA hydrolase.